A 588-amino-acid polypeptide reads, in one-letter code: Adenine deaminase (588 aa).

The protein belongs to the metallo-dependent hydrolases superfamily. Adenine deaminase family. As to quaternary structure, homodimer. Mn(2+) is required as a cofactor.

It catalyses the reaction adenine + H2O + H(+) = hypoxanthine + NH4(+). This Escherichia coli O6:H1 (strain CFT073 / ATCC 700928 / UPEC) protein is Adenine deaminase.